A 548-amino-acid chain; its full sequence is MFS-rype transporter paaT (548 aa).

Basic and acidic residues predominate over residues 1 to 10 (MEAPRSDQAH). The disordered stretch occupies residues 1–32 (MEAPRSDQAHTDATTPMEAIRTTSLGTNNYGP). The span at 21-30 (RTTSLGTNNY) shows a compositional bias: polar residues. Residues Asn-70 and Asn-93 are each glycosylated (N-linked (GlcNAc...) asparagine). 12 helical membrane passes run 100 to 120 (WYCT…SSVI), 139 to 159 (LVVI…FAPM), 174 to 194 (ALAV…TLIV), 197 to 217 (LIDG…LADL), 224 to 244 (GVPM…GPLV), 256 to 276 (WLYW…TFTV), 332 to 352 (IVLF…MFFV), 370 to 390 (GLMF…APFV), 411 to 431 (LIPM…FAWT), 436 to 456 (LHWM…ILLY), 471 to 493 (AASA…VLFT), and 505 to 525 (ASTL…VFYF). The Peroxisomal targeting signal signature appears at 258-269 (YWIQLILAFVAW).

The protein belongs to the major facilitator superfamily. DHA1 family. Polyamines/proton antiporter (TC 2.A.1.2.16) subfamily.

The protein localises to the peroxisome membrane. MFS-type transporter involved in penicillin production, most likely through the translocation of side-chain precursors (phenylacetic acid and phenoxyacetic acid) from the cytosol to the peroxisomal lumen across the peroxisomal membrane. The polypeptide is MFS-rype transporter paaT (Penicillium rubens (strain ATCC 28089 / DSM 1075 / NRRL 1951 / Wisconsin 54-1255) (Penicillium chrysogenum)).